The chain runs to 85 residues: ATP synthase subunit c (85 aa).

The next 2 helical transmembrane spans lie at 10–30 and 53–73; these read IAVAIIVGLCALGTAVGFAVL and FIIAGLLDAVPMIGIVIALLF.

It belongs to the ATPase C chain family. F-type ATPases have 2 components, F(1) - the catalytic core - and F(0) - the membrane proton channel. F(1) has five subunits: alpha(3), beta(3), gamma(1), delta(1), epsilon(1). F(0) has three main subunits: a(1), b(2) and c(10-14). The alpha and beta chains form an alternating ring which encloses part of the gamma chain. F(1) is attached to F(0) by a central stalk formed by the gamma and epsilon chains, while a peripheral stalk is formed by the delta and b chains.

Its subcellular location is the cell inner membrane. In terms of biological role, f(1)F(0) ATP synthase produces ATP from ADP in the presence of a proton or sodium gradient. F-type ATPases consist of two structural domains, F(1) containing the extramembraneous catalytic core and F(0) containing the membrane proton channel, linked together by a central stalk and a peripheral stalk. During catalysis, ATP synthesis in the catalytic domain of F(1) is coupled via a rotary mechanism of the central stalk subunits to proton translocation. Key component of the F(0) channel; it plays a direct role in translocation across the membrane. A homomeric c-ring of between 10-14 subunits forms the central stalk rotor element with the F(1) delta and epsilon subunits. The polypeptide is ATP synthase subunit c (Vibrio vulnificus (strain CMCP6)).